We begin with the raw amino-acid sequence, 827 residues long: Multiple RNA-binding domain-containing protein 1 (827 aa).

The region spanning 5 to 78 (SRIFVKNLPP…SRISVDIAKP (74 aa)) is the RRM 1 domain. Disordered regions lie at residues 77–116 (KPIA…TAAA), 176–230 (AGLE…ATDD), and 256–299 (AASG…DPES). Residues 179 to 189 (EDGESDDEYED) show a composition bias toward acidic residues. Low complexity-rich tracts occupy residues 208–225 (APLA…PVSL) and 256–270 (AASG…STSV). Positions 277–288 (KPEEHPAEDSRE) are enriched in basic and acidic residues. 4 RRM domains span residues 308–384 (SRLF…PAAA), 489–560 (TTIL…KGPK), 599–682 (SSLF…ASHR), and 704–781 (TKLV…FAQA).

This sequence belongs to the RRM MRD1 family.

The protein resides in the nucleus. Functionally, involved in pre-rRNA processing. The polypeptide is Multiple RNA-binding domain-containing protein 1 (mrd-1) (Neurospora crassa (strain ATCC 24698 / 74-OR23-1A / CBS 708.71 / DSM 1257 / FGSC 987)).